Consider the following 672-residue polypeptide: Amidase chyE (672 aa).

Cys-2 acts as the Nucleophile in catalysis. In terms of domain architecture, Glutamine amidotransferase type-2 spans 2–219 (CGISAFLCHP…PGHYLISRPN (218 aa)). The Asparagine synthetase domain maps to 250–639 (VRKRLLEAVK…TQEAVEKAFT (390 aa)).

Belongs to the asparagine synthetase family.

Its pathway is pigment biosynthesis. Its function is as follows. Amidase; part of the gene cluster that mediates the biosynthesis of the yellow pigment chrysogine. the NRPS chyA mediates the condensation of anthranilic acid and alanine into the intermediate 2-(2-aminopropanamido)benzoic acid. The remainder of the pathway is highly branched yielding at least 13 chrysogine-related compounds. The malonyl transferase chyE converts 2-(2-aminopropanamido)benzoic acid and 2-(2-aminopropanamido)benzamidine into 2-(2-(2-carboxyacetamido)propanamido)benzoic acid and 3-((1-((2-carbamoylphenyl)amino)-1-oxopropan-2-yl)amino)-3-oxopropanoic acid, respectively. ChyD is an amidase, being responsible for the amidation of the carboxylic acid moiety of 2-(2-aminopropanamido)benzoic acid, 2-(2-(2-carboxyacetamido)propanamido)benzoic acid and 2-(2-((4-amino-1-carboxy-4-oxobutyl)amino)propanamido)benzoic acid. ChyC is involved in the same reactions as ChyD, but plays a more minor role in the amidation reactions compared to chyD. The oxidoreductases chyH and chyM are involved in oxidation reactions that form N-pyruvoylanthranilamide from 2-(2-aminopropanamido)benzamidine and (1-((2-carbamoylphenyl)amino)-1-oxopropan-2-yl)glutamine, respectively. N-pyruvoylanthranilamide is further converted via two further branches in the pathway, yielding chrysogine and additional chrysogine-related coumpounds. Chrysogine is likely formed by a spontaneous ring closure from N-pyruvoylanthranilamide. The chain is Amidase chyE from Penicillium rubens (strain ATCC 28089 / DSM 1075 / NRRL 1951 / Wisconsin 54-1255) (Penicillium chrysogenum).